Reading from the N-terminus, the 155-residue chain is UPF0178 protein Amet_2995 (155 aa).

It belongs to the UPF0178 family.

The protein is UPF0178 protein Amet_2995 of Alkaliphilus metalliredigens (strain QYMF).